We begin with the raw amino-acid sequence, 258 residues long: Acyl-[acyl-carrier-protein]--UDP-N-acetylglucosamine O-acyltransferase (258 aa).

Belongs to the transferase hexapeptide repeat family. LpxA subfamily. Homotrimer.

The protein localises to the cytoplasm. The catalysed reaction is a (3R)-hydroxyacyl-[ACP] + UDP-N-acetyl-alpha-D-glucosamine = a UDP-3-O-[(3R)-3-hydroxyacyl]-N-acetyl-alpha-D-glucosamine + holo-[ACP]. It functions in the pathway glycolipid biosynthesis; lipid IV(A) biosynthesis; lipid IV(A) from (3R)-3-hydroxytetradecanoyl-[acyl-carrier-protein] and UDP-N-acetyl-alpha-D-glucosamine: step 1/6. Involved in the biosynthesis of lipid A, a phosphorylated glycolipid that anchors the lipopolysaccharide to the outer membrane of the cell. The sequence is that of Acyl-[acyl-carrier-protein]--UDP-N-acetylglucosamine O-acyltransferase from Neisseria meningitidis serogroup C / serotype 2a (strain ATCC 700532 / DSM 15464 / FAM18).